The sequence spans 360 residues: Phospho-N-acetylmuramoyl-pentapeptide-transferase (360 aa).

10 consecutive transmembrane segments (helical) span residues 26–46 (AIVS…RMIA), 72–92 (PTMG…LWAY), 94–114 (SNPY…IGFV), 132–152 (WKYF…YLAG), 168–188 (VMPQ…VGTG), 199–219 (GLAI…AWAT), 236–256 (AGEL…FLWF), 263–283 (VFMG…IAVL), 288–308 (FLLV…ILQV), and 338–358 (VIVR…ATLK).

This sequence belongs to the glycosyltransferase 4 family. MraY subfamily. It depends on Mg(2+) as a cofactor.

The protein resides in the cell inner membrane. The catalysed reaction is UDP-N-acetyl-alpha-D-muramoyl-L-alanyl-gamma-D-glutamyl-meso-2,6-diaminopimeloyl-D-alanyl-D-alanine + di-trans,octa-cis-undecaprenyl phosphate = di-trans,octa-cis-undecaprenyl diphospho-N-acetyl-alpha-D-muramoyl-L-alanyl-D-glutamyl-meso-2,6-diaminopimeloyl-D-alanyl-D-alanine + UMP. It participates in cell wall biogenesis; peptidoglycan biosynthesis. Catalyzes the initial step of the lipid cycle reactions in the biosynthesis of the cell wall peptidoglycan: transfers peptidoglycan precursor phospho-MurNAc-pentapeptide from UDP-MurNAc-pentapeptide onto the lipid carrier undecaprenyl phosphate, yielding undecaprenyl-pyrophosphoryl-MurNAc-pentapeptide, known as lipid I. The protein is Phospho-N-acetylmuramoyl-pentapeptide-transferase of Enterobacter sp. (strain 638).